The chain runs to 348 residues: Phenylalanine--tRNA ligase alpha subunit (348 aa).

Glutamate 262 contacts Mg(2+).

This sequence belongs to the class-II aminoacyl-tRNA synthetase family. Phe-tRNA synthetase alpha subunit type 1 subfamily. Tetramer of two alpha and two beta subunits. It depends on Mg(2+) as a cofactor.

The protein resides in the cytoplasm. The enzyme catalyses tRNA(Phe) + L-phenylalanine + ATP = L-phenylalanyl-tRNA(Phe) + AMP + diphosphate + H(+). This is Phenylalanine--tRNA ligase alpha subunit from Streptococcus pneumoniae (strain 70585).